Consider the following 265-residue polypeptide: Undecaprenyl-diphosphatase (265 aa).

A run of 7 helical transmembrane segments spans residues 38 to 58, 80 to 100, 107 to 127, 135 to 155, 175 to 195, 213 to 233, and 244 to 264; these read SDMF…IIYW, LIVA…LGFE, PIAW…WAAA, ITWL…VFPG, AAAT…ASGY, ALAI…KWLL, and FAIY…TGMI.

It belongs to the UppP family.

The protein resides in the cell inner membrane. It carries out the reaction di-trans,octa-cis-undecaprenyl diphosphate + H2O = di-trans,octa-cis-undecaprenyl phosphate + phosphate + H(+). In terms of biological role, catalyzes the dephosphorylation of undecaprenyl diphosphate (UPP). Confers resistance to bacitracin. The chain is Undecaprenyl-diphosphatase from Rhizobium etli (strain ATCC 51251 / DSM 11541 / JCM 21823 / NBRC 15573 / CFN 42).